We begin with the raw amino-acid sequence, 152 residues long: Transcriptional regulator MraZ (152 aa).

2 consecutive SpoVT-AbrB domains span residues 5 to 52 (VTSI…PLHE) and 81 to 124 (ATEC…QDKQ).

The protein belongs to the MraZ family. Forms oligomers.

The protein resides in the cytoplasm. It is found in the nucleoid. This chain is Transcriptional regulator MraZ, found in Actinobacillus pleuropneumoniae serotype 3 (strain JL03).